A 448-amino-acid chain; its full sequence is Putative carbonic anhydrase 2 (448 aa).

Residues Ala1–Ile222 form the Alpha-carbonic anhydrase domain. Zn(2+) is bound at residue His19. N-linked (GlcNAc...) asparagine glycosylation is found at Asn139 and Asn198. Positions Arg229–Asn448 are disordered. Over residues Asp245 to Asp280 the composition is skewed to acidic residues. Composition is skewed to basic and acidic residues over residues Asp281–Gly334 and Arg342–Asn354. A glycan (N-linked (GlcNAc...) asparagine) is linked at Asn314. Gly residues predominate over residues Asn357–Gly368. Basic and acidic residues predominate over residues Gly370–Asn379. An N-linked (GlcNAc...) asparagine glycan is attached at Asn385. Over residues Gly386 to Arg421 the composition is skewed to basic and acidic residues. Positions Arg422–Gly435 are enriched in basic residues. Over residues Arg436–Asn448 the composition is skewed to basic and acidic residues.

It belongs to the alpha-carbonic anhydrase family. Component of the acid-insoluble and acid-soluble organic matrix of calcified layers of the shell (at protein level).

It localises to the secreted. The catalysed reaction is hydrogencarbonate + H(+) = CO2 + H2O. Its function is as follows. Reversible hydration of carbon dioxide. In Lottia gigantea (Giant owl limpet), this protein is Putative carbonic anhydrase 2.